The following is a 119-amino-acid chain: Chymotrypsin inhibitor WCI (119 aa).

5 cysteine pairs are disulfide-bonded: Cys6-Cys55, Cys20-Cys44, Cys29-Cys87, Cys45-Cys105, and Cys57-Cys116.

It localises to the secreted. Functionally, inhibits bovine, insect and wheat chymotrypsins. Inhibits bovine chymotrypsin with Ki of 0.6 nM. Does not inhibit human or wheat alpha-amylases, bovine pancreatic trypsin, or trypsin-like activity isolated from wheat. In Triticum aestivum (Wheat), this protein is Chymotrypsin inhibitor WCI.